The chain runs to 288 residues: Shikimate dehydrogenase (NADP(+)) (288 aa).

Residues 15-17 and Thr64 each bind shikimate; that span reads SKS. Lys68 acts as the Proton acceptor in catalysis. Position 83 (Glu83) interacts with NADP(+). Residues Asn92 and Asp117 each contribute to the shikimate site. NADP(+) is bound by residues 141 to 145, 165 to 170, and Met232; these read GAGGA and NRTVSK. Tyr234 is a shikimate binding site. Residue Gly254 coordinates NADP(+).

Belongs to the shikimate dehydrogenase family. As to quaternary structure, homodimer.

The catalysed reaction is shikimate + NADP(+) = 3-dehydroshikimate + NADPH + H(+). The protein operates within metabolic intermediate biosynthesis; chorismate biosynthesis; chorismate from D-erythrose 4-phosphate and phosphoenolpyruvate: step 4/7. In terms of biological role, involved in the biosynthesis of the chorismate, which leads to the biosynthesis of aromatic amino acids. Catalyzes the reversible NADPH linked reduction of 3-dehydroshikimate (DHSA) to yield shikimate (SA). The polypeptide is Shikimate dehydrogenase (NADP(+)) (Psychrobacter cryohalolentis (strain ATCC BAA-1226 / DSM 17306 / VKM B-2378 / K5)).